The chain runs to 110 residues: Small heat shock protein hspG11 (110 aa).

The sHSP domain occupies 30–110 (KTIIDILPPM…KSTSTSSTFR (81 aa)). The interval 78-110 (KDLNKQHNNNNNNNNNNNNLVIEKSTSTSSTFR) is disordered. Residues 85–96 (NNNNNNNNNNNN) show a composition bias toward low complexity. Positions 101 to 110 (KSTSTSSTFR) are enriched in polar residues.

This sequence belongs to the small heat shock protein (HSP20) family.

In Dictyostelium discoideum (Social amoeba), this protein is Small heat shock protein hspG11 (hspG11).